Consider the following 62-residue polypeptide: Large ribosomal subunit protein uL30 (62 aa).

Belongs to the universal ribosomal protein uL30 family. Part of the 50S ribosomal subunit.

This chain is Large ribosomal subunit protein uL30, found in Herpetosiphon aurantiacus (strain ATCC 23779 / DSM 785 / 114-95).